Here is a 450-residue protein sequence, read N- to C-terminus: Tubulin alpha-3E chain (450 aa).

The MREC motif motif lies at 1 to 4 (MREC). Glutamine 11 lines the GTP pocket. Lysine 40 is subject to N6-acetyllysine. Residues glutamate 71, serine 140, glycine 144, threonine 145, threonine 179, asparagine 206, and asparagine 228 each contribute to the GTP site. Glutamate 71 is a Mg(2+) binding site. Glutamate 254 is a catalytic residue. 3'-nitrotyrosine is present on tyrosine 282. Position 439 is a phosphoserine (serine 439). At tyrosine 450 the chain carries 3'-nitrotyrosine.

Belongs to the tubulin family. In terms of assembly, dimer of alpha and beta chains. A typical microtubule is a hollow water-filled tube with an outer diameter of 25 nm and an inner diameter of 15 nM. Alpha-beta heterodimers associate head-to-tail to form protofilaments running lengthwise along the microtubule wall with the beta-tubulin subunit facing the microtubule plus end conferring a structural polarity. Microtubules usually have 13 protofilaments but different protofilament numbers can be found in some organisms and specialized cells. The cofactor is Mg(2+). Some glutamate residues at the C-terminus are polyglutamylated, resulting in polyglutamate chains on the gamma-carboxyl group. Polyglutamylation plays a key role in microtubule severing by spastin (SPAST). SPAST preferentially recognizes and acts on microtubules decorated with short polyglutamate tails: severing activity by SPAST increases as the number of glutamates per tubulin rises from one to eight, but decreases beyond this glutamylation threshold. Glutamylation is also involved in cilia motility. In terms of processing, some glutamate residues at the C-terminus are monoglycylated but not polyglycylated due to the absence of functional TTLL10 in human. Monoglycylation is mainly limited to tubulin incorporated into cilia and flagella axonemes, which is required for their stability and maintenance. Flagella glycylation controls sperm motility. Both polyglutamylation and monoglycylation can coexist on the same protein on adjacent residues, and lowering glycylation levels increases polyglutamylation, and reciprocally. Post-translationally, acetylation of alpha chains at Lys-40 is located inside the microtubule lumen. This modification has been correlated with increased microtubule stability, intracellular transport and ciliary assembly. Methylation of alpha chains at Lys-40 is found in mitotic microtubules and is required for normal mitosis and cytokinesis contributing to genomic stability. In terms of processing, nitration of Tyr-450 is irreversible and interferes with normal dynein intracellular distribution. Post-translationally, undergoes a tyrosination/detyrosination cycle, the cyclic removal and re-addition of a C-terminal tyrosine residue by the enzymes tubulin tyrosine carboxypeptidase (MATCAP1/KIAA0895L, VASH1 or VASH2) and tubulin tyrosine ligase (TTL), respectively. Tyrosination promotes microtubule interaction with CAP-Gly domain-containing proteins such as CLIP1, CLIP2 and DCTN1. Tyrosination regulates the initiation of dynein-dynactin motility via interaction with DCTN1, which brings the dynein-dynactin complex into contact with microtubules. In neurons, tyrosinated tubulins mediate the initiation of retrograde vesicle transport. In terms of processing, detyrosination is involved in metaphase plate congression by guiding chromosomes during mitosis: detyrosination promotes interaction with CENPE, promoting pole-proximal transport of chromosomes toward the equator. Detyrosination increases microtubules-dependent mechanotransduction in dystrophic cardiac and skeletal muscle. In cardiomyocytes, detyrosinated microtubules are required to resist to contractile compression during contraction: detyrosination promotes association with desmin (DES) at force-generating sarcomeres, leading to buckled microtubules and mechanical resistance to contraction.

It is found in the cytoplasm. Its subcellular location is the cytoskeleton. It carries out the reaction GTP + H2O = GDP + phosphate + H(+). Its function is as follows. Tubulin is the major constituent of microtubules, a cylinder consisting of laterally associated linear protofilaments composed of alpha- and beta-tubulin heterodimers. Microtubules grow by the addition of GTP-tubulin dimers to the microtubule end, where a stabilizing cap forms. Below the cap, tubulin dimers are in GDP-bound state, owing to GTPase activity of alpha-tubulin. This chain is Tubulin alpha-3E chain (TUBA3E), found in Homo sapiens (Human).